The primary structure comprises 198 residues: Transcription factor BHLH133 (198 aa).

The basic motif; degenerate stretch occupies residues 114 to 127 (SAESSQSYYAKNRR). Positions 114 to 163 (SAESSQSYYAKNRRQRINERLRILQELIPNGTKVDISTMLEEAIQYVKFL) constitute a bHLH domain. Residues 128–163 (QRINERLRILQELIPNGTKVDISTMLEEAIQYVKFL) form a helix-loop-helix motif region.

Belongs to the bHLH protein family.

It is found in the nucleus. Functionally, transcription factor that acts as a regulator of iron homeostasis. May act as negative regulator of iron transportation from root to shoot. Does not seem to be involved in the suppression of the induction of iron deficiency responsive genes. In Oryza sativa subsp. japonica (Rice), this protein is Transcription factor BHLH133.